Consider the following 245-residue polypeptide: rRNA adenine N-6-methyltransferase (245 aa).

Residues Asn-10, Leu-12, Gly-37, Glu-58, Asp-83, and Ser-100 each contribute to the S-adenosyl-L-methionine site.

Belongs to the class I-like SAM-binding methyltransferase superfamily. rRNA adenine N(6)-methyltransferase family.

It carries out the reaction adenosine(2085) in 23S rRNA + 2 S-adenosyl-L-methionine = N(6)-dimethyladenosine(2085) in 23S rRNA + 2 S-adenosyl-L-homocysteine + 2 H(+). Functionally, this protein produces a dimethylation of the adenine residue at position 2085 in 23S rRNA, resulting in reduced affinity between ribosomes and macrolide-lincosamide-streptogramin B antibiotics. This Clostridium perfringens protein is rRNA adenine N-6-methyltransferase (ermBP).